The following is a 219-amino-acid chain: MHFIFYLILLVSAADYGNFGTYPKVPKTASINGFADPIYDLLPDCAKECVKFSTSNTPCPYWDTGCFCVMPQWAGLVGQCVAQKCKGEDVASARFLATSLCSVVGANTWMMPASISSMLSTAAGDAKEVTTIEGKTAKSWVTAPGSAAGSVVSETGSASETGSSESAQSTTTGSSSTGSSSTDSSSSSSSSPSSSANFAVLQTGGIGSVILGFMMYLLV.

The N-terminal stretch at 1–13 (MHFIFYLILLVSA) is a signal peptide. A CFEM domain is found at 17-126 (GNFGTYPKVP…SMLSTAAGDA (110 aa)). Disulfide bonds link Cys45–Cys85, Cys49–Cys80, Cys59–Cys66, and Cys68–Cys101. Asp63 provides a ligand contact to heme. The segment at 151–194 (VVSETGSASETGSSESAQSTTTGSSSTGSSSTDSSSSSSSSPSS) is disordered. The segment covering 153–194 (SETGSASETGSSESAQSTTTGSSSTGSSSTDSSSSSSSSPSS) has biased composition (low complexity). A lipid anchor (GPI-anchor amidated serine) is attached at Ser194. Positions 195–219 (SANFAVLQTGGIGSVILGFMMYLLV) are cleaved as a propeptide — removed in mature form.

It belongs to the RBT5 family. As to quaternary structure, interacts with RBT5. Post-translationally, the GPI-anchor is attached to the protein in the endoplasmic reticulum and serves to target the protein to the cell surface. There, the glucosamine-inositol phospholipid moiety is cleaved off and the GPI-modified mannoprotein is covalently attached via its lipidless GPI glycan remnant to the 1,6-beta-glucan of the outer cell wall layer.

It is found in the secreted. The protein localises to the cell wall. The protein resides in the cell membrane. Functionally, GPI-linked hyphal surface heme-binding protein involved in heme-iron utilization. Heme transfer occurs between PGA7, RBT5 and CSA2 supporting a model in which the 3 CFEM proteins cooperate in a heme-acquisition system and form a cross-cell wall heme-transfer cascade. The ability to acquire iron from host tissues is a major virulence factor of pathogenic microorganisms. Required for biofilm formation. The polypeptide is GPI-anchored hemophore PGA7 (Candida albicans (strain SC5314 / ATCC MYA-2876) (Yeast)).